Reading from the N-terminus, the 859-residue chain is Ribose import ATP-binding protein RbsA 1 (859 aa).

The disordered stretch occupies residues 1-351 (MRASLENGDD…AARAPDEASE (351 aa)). The unknown stretch occupies residues 1 to 353 (MRASLENGDD…RAPDEASEEA (353 aa)). Residues 8–17 (GDDHDAHRLV) are compositionally biased toward basic and acidic residues. The segment covering 28 to 43 (RAARRRAFARARRGER) has biased composition (basic residues). 3 stretches are compositionally biased toward basic and acidic residues: residues 44 to 80 (RARGTAEDRHDVPGAEQPVLRDDAKGARRGGRVDRRA), 89 to 129 (RREQ…EEGG), and 137 to 167 (RERERPGRRVRRLEEFRRGRDVVRLPREGDR). Over residues 168–179 (RRRRSRDPRRHP) the composition is skewed to basic residues. 5 stretches are compositionally biased toward basic and acidic residues: residues 193–214 (GAREIPEREDRRRAERQAGARE), 239–250 (RLDGRAVRDRGV), 263–281 (AGGDRGDAEAELEVHRDVR), 288–301 (DSPRDRHRAREEVG), and 308–323 (DSGRREADRQGQREDV). 2 consecutive ABC transporter domains span residues 358 to 594 (LALT…VGRR) and 607 to 851 (RDAA…TSDV). 390 to 397 (GENGAGKS) is an ATP binding site.

Belongs to the ABC transporter superfamily. Ribose importer (TC 3.A.1.2.1) family. In terms of assembly, the complex is composed of an ATP-binding protein (RbsA), two transmembrane proteins (RbsC) and a solute-binding protein (RbsB).

It is found in the cell inner membrane. It catalyses the reaction D-ribose(out) + ATP + H2O = D-ribose(in) + ADP + phosphate + H(+). In terms of biological role, part of the ABC transporter complex RbsABC involved in ribose import. Responsible for energy coupling to the transport system. The polypeptide is Ribose import ATP-binding protein RbsA 1 (Burkholderia pseudomallei (strain 1710b)).